Reading from the N-terminus, the 302-residue chain is tRNA-cytidine(32) 2-sulfurtransferase (302 aa).

A PP-loop motif motif is present at residues 43–48 (SGGKDS). [4Fe-4S] cluster contacts are provided by Cys118, Cys121, and Cys209.

Belongs to the TtcA family. In terms of assembly, homodimer. Mg(2+) is required as a cofactor. [4Fe-4S] cluster serves as cofactor.

The protein resides in the cytoplasm. The enzyme catalyses cytidine(32) in tRNA + S-sulfanyl-L-cysteinyl-[cysteine desulfurase] + AH2 + ATP = 2-thiocytidine(32) in tRNA + L-cysteinyl-[cysteine desulfurase] + A + AMP + diphosphate + H(+). Its pathway is tRNA modification. Catalyzes the ATP-dependent 2-thiolation of cytidine in position 32 of tRNA, to form 2-thiocytidine (s(2)C32). The sulfur atoms are provided by the cysteine/cysteine desulfurase (IscS) system. This Polynucleobacter necessarius subsp. necessarius (strain STIR1) protein is tRNA-cytidine(32) 2-sulfurtransferase.